Reading from the N-terminus, the 65-residue chain is Kassorin-M (65 aa).

Positions 1-22 (MLTLKKSMLLLFFLGMVSFSLA) are cleaved as a signal peptide. The propeptide occupies 23 to 51 (DDKREDEAEEGEDKRADEGEEKRAAEKKR). The interval 24-45 (DKREDEAEEGEDKRADEGEEKR) is disordered. Residue L64 is modified to Leucine amide.

This sequence belongs to the frog skin active peptide (FSAP) family. Brevinin subfamily. Expressed by the skin glands.

It localises to the secreted. Functionally, induces contraction of smooth muscle in isolated guinea pig urinary bladder (EC50=4.66 nM). Has no antimicrobial activity against the Gram-positive bacterium S.aureus, the Gram-negative bacterium E.coli and the yeast C.albicans. Elicits histamine release from rat peritoneal mast cells. This chain is Kassorin-M, found in Phlyctimantis maculatus (Red-legged running frog).